The chain runs to 195 residues: Probable GTP-binding protein EngB (195 aa).

The EngB-type G domain maps to 24–195 (ELPEIALAGR…EAWDAILEKL (172 aa)). GTP is bound by residues 32 to 39 (GRSNVGKS), 59 to 63 (GKTQL), 77 to 80 (DVPG), 144 to 147 (TKAD), and 176 to 178 (FSS). S39 and T61 together coordinate Mg(2+).

Belongs to the TRAFAC class TrmE-Era-EngA-EngB-Septin-like GTPase superfamily. EngB GTPase family. Mg(2+) is required as a cofactor.

Functionally, necessary for normal cell division and for the maintenance of normal septation. The polypeptide is Probable GTP-binding protein EngB (Streptococcus pneumoniae (strain ATCC 700669 / Spain 23F-1)).